A 296-amino-acid polypeptide reads, in one-letter code: UDP-N-acetylglucosamine transporter TMEM241 (296 aa).

Helical transmembrane passes span Leu-7–Val-29, Phe-32–Val-52, Ser-67–Ser-87, Leu-93–Gln-113, Thr-121–Phe-141, Phe-146–Ile-166, Ile-187–Leu-207, Phe-211–Leu-231, Trp-250–Leu-270, and Thr-271–Ser-291.

The protein belongs to the nucleotide-sugar transporter family. SLC35A subfamily.

It localises to the golgi apparatus. The protein localises to the cis-Golgi network membrane. Its function is as follows. Golgi-localized UDP-N-acetylglucosamine (UDP-GlcNAc) transporter that transports UDP-N-acetylglucosamine into Golgi lumen. Contributes to lysosomal targeting of NPC2, a key protein required for lysosomal cholesterol exiting, and that utilizes the mannose-6-phosphate (M6P) modification pathway for its lysosomal targeting. The protein is UDP-N-acetylglucosamine transporter TMEM241 of Homo sapiens (Human).